Here is a 477-residue protein sequence, read N- to C-terminus: Prolyl tri/tetrapeptidyl aminopeptidase (477 aa).

Residues 1-27 form the signal peptide; sequence MRKALRSLLAASMLIGAIGAGSATAEA. Residues 28 to 33 constitute a propeptide that is removed on maturation; sequence ASITAP. Residues 448–477 are disordered; sequence QKDEKAAKPLAPFDAKLDRVKNDKQSALRP. The span at 462–477 shows a compositional bias: basic and acidic residues; the sequence is AKLDRVKNDKQSALRP.

The protein belongs to the peptidase S37 family.

It localises to the secreted. The protein resides in the cell surface. With respect to regulation, completely inhibited by the serine protease inhibitor phenylmethylsulfonyl fluoride. Partially inhibited by the serine protease inhibitor Pefabloc. Not inhibited by cysteine proteinase-specific or metalloproteinase-specific inhibitors. Not inhibited by prolinal or its derivatives. EDTA and EGTA both partially inhibit this enzyme. EDTA has no effect on activity. Functionally, has proline-specific tripeptidyl aminopeptidase and tetrapeptidyl aminopeptidase activity. Activity is highest against tripeptides containing an Ala-Pro motif. Involved in the final processing of transglutaminase, by removing either the tetrapeptide Phe-Arg-Ala-Pro left after TAMEP or SAM-P45 hydrolysis, or the tripeptide Arg-Ala-Pro left after SGMP II hydrolysis in a single step. This chain is Prolyl tri/tetrapeptidyl aminopeptidase (ptp), found in Streptomyces mobaraensis (Streptoverticillium mobaraense).